Reading from the N-terminus, the 245-residue chain is DNA repair protein RecO (245 aa).

Belongs to the RecO family.

Functionally, involved in DNA repair and RecF pathway recombination. The sequence is that of DNA repair protein RecO from Bartonella bacilliformis (strain ATCC 35685 / KC583 / Herrer 020/F12,63).